Here is a 105-residue protein sequence, read N- to C-terminus: Putative ferredoxin-3 (105 aa).

4Fe-4S ferredoxin-type domains lie at 17–46 and 70–100; these read YLTA…LHGI and TIMV…HVAA. [4Fe-4S] cluster-binding residues include C26, C29, C32, C36, C80, C83, C86, and C90.

[4Fe-4S] cluster is required as a cofactor.

Ferredoxins are iron-sulfur proteins that transfer electrons in a wide variety of metabolic reactions. The chain is Putative ferredoxin-3 (fdxB) from Sinorhizobium fredii (strain NBRC 101917 / NGR234).